The following is a 2090-amino-acid chain: Nuclear pore complex protein Nup205 (2090 aa).

It belongs to the NUP186/NUP192/NUP205 family. As to quaternary structure, part of the nuclear pore complex (NPC).

The protein localises to the nucleus. It is found in the nuclear pore complex. Functionally, plays a role in the nuclear pore complex (NPC) assembly and maintenance, but with limited role in NPC permeability. Required for specific nuclear import pathways such as Mad import. This is Nuclear pore complex protein Nup205 from Drosophila melanogaster (Fruit fly).